An 81-amino-acid chain; its full sequence is Photosystem I iron-sulfur center (81 aa).

2 consecutive 4Fe-4S ferredoxin-type domains span residues 2 to 31 and 39 to 68; these read SHSV…MIPW and IASA…VRVY. [4Fe-4S] cluster contacts are provided by cysteine 11, cysteine 14, cysteine 17, cysteine 21, cysteine 48, cysteine 51, cysteine 54, and cysteine 58.

In terms of assembly, the eukaryotic PSI reaction center is composed of at least 11 subunits. Requires [4Fe-4S] cluster as cofactor.

The protein localises to the plastid. It localises to the chloroplast thylakoid membrane. It carries out the reaction reduced [plastocyanin] + hnu + oxidized [2Fe-2S]-[ferredoxin] = oxidized [plastocyanin] + reduced [2Fe-2S]-[ferredoxin]. Functionally, apoprotein for the two 4Fe-4S centers FA and FB of photosystem I (PSI); essential for photochemical activity. FB is the terminal electron acceptor of PSI, donating electrons to ferredoxin. The C-terminus interacts with PsaA/B/D and helps assemble the protein into the PSI complex. Required for binding of PsaD and PsaE to PSI. PSI is a plastocyanin-ferredoxin oxidoreductase, converting photonic excitation into a charge separation, which transfers an electron from the donor P700 chlorophyll pair to the spectroscopically characterized acceptors A0, A1, FX, FA and FB in turn. The sequence is that of Photosystem I iron-sulfur center from Phaseolus vulgaris (Kidney bean).